The sequence spans 324 residues: N-acetyl-gamma-glutamyl-phosphate reductase (324 aa).

The active site involves cysteine 131.

This sequence belongs to the NAGSA dehydrogenase family. Type 1 subfamily.

The protein resides in the cytoplasm. The catalysed reaction is N-acetyl-L-glutamate 5-semialdehyde + phosphate + NADP(+) = N-acetyl-L-glutamyl 5-phosphate + NADPH + H(+). It participates in amino-acid biosynthesis; L-arginine biosynthesis; N(2)-acetyl-L-ornithine from L-glutamate: step 3/4. Functionally, catalyzes the NADPH-dependent reduction of N-acetyl-5-glutamyl phosphate to yield N-acetyl-L-glutamate 5-semialdehyde. This chain is N-acetyl-gamma-glutamyl-phosphate reductase, found in Bradyrhizobium sp. (strain ORS 278).